The following is a 498-amino-acid chain: ATP synthase subunit beta, chloroplastic (498 aa).

172–179 (GGAGVGKT) lines the ATP pocket.

This sequence belongs to the ATPase alpha/beta chains family. As to quaternary structure, F-type ATPases have 2 components, CF(1) - the catalytic core - and CF(0) - the membrane proton channel. CF(1) has five subunits: alpha(3), beta(3), gamma(1), delta(1), epsilon(1). CF(0) has four main subunits: a(1), b(1), b'(1) and c(9-12).

Its subcellular location is the plastid. It is found in the chloroplast thylakoid membrane. The enzyme catalyses ATP + H2O + 4 H(+)(in) = ADP + phosphate + 5 H(+)(out). Produces ATP from ADP in the presence of a proton gradient across the membrane. The catalytic sites are hosted primarily by the beta subunits. The polypeptide is ATP synthase subunit beta, chloroplastic (Lolium perenne (Perennial ryegrass)).